The sequence spans 307 residues: F-box protein PP2-B7 (307 aa).

One can recognise an F-box domain in the interval 37 to 83 (PLSLGDLPEECISLIISFTSPRDACVFALVSKTFESAVQSDIVWEKF).

This chain is F-box protein PP2-B7 (PP2B7), found in Arabidopsis thaliana (Mouse-ear cress).